Here is a 219-residue protein sequence, read N- to C-terminus: Ribose-5-phosphate isomerase A (219 aa).

Substrate-binding positions include 28–31, 81–84, and 94–97; these read TGST, DGAD, and KGGG. Catalysis depends on glutamate 103, which acts as the Proton acceptor. Lysine 121 serves as a coordination point for substrate.

The protein belongs to the ribose 5-phosphate isomerase family. As to quaternary structure, homodimer.

It carries out the reaction aldehydo-D-ribose 5-phosphate = D-ribulose 5-phosphate. Its pathway is carbohydrate degradation; pentose phosphate pathway; D-ribose 5-phosphate from D-ribulose 5-phosphate (non-oxidative stage): step 1/1. Functionally, catalyzes the reversible conversion of ribose-5-phosphate to ribulose 5-phosphate. In Salmonella choleraesuis (strain SC-B67), this protein is Ribose-5-phosphate isomerase A.